A 153-amino-acid polypeptide reads, in one-letter code: ORM1-like protein 3 (153 aa).

An important for ceramide level-sensing region spans residues 1 to 17 (MNVGTAHSEVNPNTRVM). The Cytoplasmic segment spans residues 1 to 21 (MNVGTAHSEVNPNTRVMNSRG). 2 helical membrane passes run 22 to 42 (IWLSYVLAIGLLHVVLLSIPF) and 43 to 63 (VSVPVVWTLTNLIHNLGMYIF). Residues 64-94 (LHTVKGTPFETPDQGKARLLTHWEQMDYGVQ) lie on the Cytoplasmic side of the membrane. Residues 95-117 (FTASRKFLTITPIVLYFLTSFYT) form a helical membrane-spanning segment. Over 118-121 (KYDQ) the chain is Extracellular. A helical membrane pass occupies residues 122-142 (VHFILNTVSLMTVLIPKLPQL). Pro-137 carries the post-translational modification Hydroxyproline. Residues 143–153 (HGVRIFGINKY) lie on the Cytoplasmic side of the membrane.

This sequence belongs to the ORM family. In terms of assembly, ceramide-sensitive subunit of the serine palmitoyltransferase (SPT) complex, which is also composed of SPTLC1, SPTLC2/3 and SPTSSA/B. When hydroxylated at Pro-137, ubiquitinated via 'Lys-48'-linkage, leading to proteasomal degradation. In endothelial cells, ORMDL3 proteasomal degradation is controlled by the sphingosine 1-phosphate receptor signaling pathway.

Its subcellular location is the endoplasmic reticulum membrane. Functionally, plays an essential role in the homeostatic regulation of sphingolipid de novo biosynthesis by modulating the activity of the serine palmitoyltransferase (SPT) in response to ceramide levels. When complexed to SPT, the binding of ceramides to its N-terminus stabilizes a conformation that block SPT substrate entry, hence preventing SPT catalytic activity. Through this mechanism, maintains ceramide levels at sufficient concentrations for the production of complex sphingolipids, but which prevents the accumulation of ceramides to levels that trigger apoptosis. This is ORM1-like protein 3 (Ormdl3) from Mus musculus (Mouse).